A 921-amino-acid polypeptide reads, in one-letter code: AdoMet-dependent rRNA methyltransferase SPB1 (921 aa).

G58, W60, D78, D94, and D119 together coordinate S-adenosyl-L-methionine. The active-site Proton acceptor is K159. A coiled-coil region spans residues 367–414 (VEEMDEDDQIDDELARLNEEAARKARKERRRKNELRQKKILKMQLQMT). Disordered stretches follow at residues 448-476 (ALIQQADVSDDESETIVSSQHTDDDDPET), 491-604 (EFKQ…KRSL), 635-713 (ELDE…GKQK), 814-835 (LEKAQKKAETINENEDISEKEK), and 866-921 (RGLK…GPRN). The segment covering 491 to 522 (EFKQKQSERDAKFRAKQARLQDAKNDSWHGIK) has biased composition (basic and acidic residues). 4 stretches are compositionally biased toward acidic residues: residues 523 to 542 (DDEENDEDDDEANLSDESEG), 555 to 568 (ETFDTDDEEDEEDE), 635 to 684 (ELDE…DDFE), and 697 to 708 (DEEWDLNGEDEE). Positions 796–835 (IKKVAEAKARKKMRTLRRLEKAQKKAETINENEDISEKEK) form a coiled coil. Basic and acidic residues predominate over residues 814-823 (LEKAQKKAET). A compositionally biased stretch (basic residues) spans 868-879 (LKGRPKGTKGRY). Over residues 880-892 (KMVDPRMKKELRA) the composition is skewed to basic and acidic residues.

This sequence belongs to the class I-like SAM-binding methyltransferase superfamily. RNA methyltransferase RlmE family. SPB1 subfamily. In terms of assembly, component of the nucleolar and nucleoplasmic pre-60S ribosomal particle.

The protein resides in the nucleus. The protein localises to the nucleolus. It catalyses the reaction a ribonucleotide in rRNA + S-adenosyl-L-methionine = a 2'-O-methylribonucleotide in rRNA + S-adenosyl-L-homocysteine + H(+). Its function is as follows. Required for proper assembly of pre-ribosomal particles during the biogenesis of the 60S ribosomal subunit. This Mycosarcoma maydis (Corn smut fungus) protein is AdoMet-dependent rRNA methyltransferase SPB1.